The following is a 313-amino-acid chain: Protein MFI (313 aa).

As to quaternary structure, can homodimerize. Interacts with MFF; the interaction inhibits MFF interaction with DNM1L. In terms of tissue distribution, enriched in the pancreatic beta cell and the testis and is expressed at low levels in other tissues tested.

It localises to the cytoplasm. It is found in the cytosol. Its subcellular location is the mitochondrion outer membrane. Functionally, acts as an inhibitor of mitochondrial fission. Interacts with MFF and prevents DNM1L recruitment to mitochondria, promoting a more fused mitochondrial network. The protein is Protein MFI of Homo sapiens (Human).